The following is a 440-amino-acid chain: Transposon Ty1-A Gag polyprotein (440 aa).

Composition is skewed to polar residues over residues 1–23 (MESQ…SVTS), 48–60 (TKAN…TPAS), 71–93 (SPQT…MMTQ), and 127–152 (QSQF…GNTF). Disordered regions lie at residues 1-93 (MESQ…MMTQ), 126-173 (PQSQ…RPPP), and 352-440 (GSRN…PETY). The segment covering 153–165 (TDSSSADSDMTST) has biased composition (low complexity). The segment at 299-401 (NNGIHINNKV…NSKSKTARAH (103 aa)) is RNA-binding. A compositionally biased stretch (low complexity) spans 402 to 418 (NVSTSNNSPSTDNDSIS). Phosphoserine is present on S416. The segment covering 419 to 428 (KSTTEPIQLN) has biased composition (polar residues). A compositionally biased stretch (basic and acidic residues) spans 429 to 440 (NKHDLHLRPETY).

Homotrimer.

Its subcellular location is the cytoplasm. Capsid protein (CA) is the structural component of the virus-like particle (VLP), forming the shell that encapsulates the retrotransposons dimeric RNA genome. The particles are assembled from trimer-clustered units and there are holes in the capsid shells that allow for the diffusion of macromolecules. CA also has nucleocapsid-like chaperone activity, promoting primer tRNA(i)-Met annealing to the multipartite primer-binding site (PBS), dimerization of Ty1 RNA and initiation of reverse transcription. This Saccharomyces cerevisiae (strain ATCC 204508 / S288c) (Baker's yeast) protein is Transposon Ty1-A Gag polyprotein (TY1A-A).